We begin with the raw amino-acid sequence, 331 residues long: MKKPVVIGLAIAAIVAVIAGGTWWYQSRQDDGLTLYGNVDIRTVNISFRVGGRLASLNVDEGDAIKAGQVLGELDHAPYENALMQAKAGVSVAQAQYDLMLAGYRDEEIAQAAAAVRQAQAAYDYAQNFYNRQQGLWKSRTISANDLENARSSRDQAQATLKSAQDKLSQYRTGNREQDIAQAKASLEQAKAQLAQAQLDLQDTTLIAPANGTLLTRAVEPGSMLNAGSTVLTLSLTRPVWVRAYVDERNLSQTQPGRDILLYTDGRPDKPYHGKIGFVSPTAEFTPKTVETPDLRTDLVYRLRIIVTDADDALRQGMPVTVKFNDEVRHE.

The N-terminal stretch at M1–A19 is a signal peptide. Positions E107 to A208 form a coiled coil.

The protein belongs to the UPF0194 family.

The protein resides in the periplasm. The chain is UPF0194 membrane protein YbhG from Salmonella paratyphi A (strain ATCC 9150 / SARB42).